Reading from the N-terminus, the 174-residue chain is Peptide deformylase (174 aa).

Fe cation is bound by residues cysteine 96 and histidine 138. The active site involves glutamate 139. Histidine 142 contacts Fe cation.

This sequence belongs to the polypeptide deformylase family. It depends on Fe(2+) as a cofactor.

It carries out the reaction N-terminal N-formyl-L-methionyl-[peptide] + H2O = N-terminal L-methionyl-[peptide] + formate. Functionally, removes the formyl group from the N-terminal Met of newly synthesized proteins. Requires at least a dipeptide for an efficient rate of reaction. N-terminal L-methionine is a prerequisite for activity but the enzyme has broad specificity at other positions. The sequence is that of Peptide deformylase from Helicobacter pylori (strain P12).